Here is a 199-residue protein sequence, read N- to C-terminus: NADH-quinone oxidoreductase subunit C (199 aa).

The protein belongs to the complex I 30 kDa subunit family. As to quaternary structure, NDH-1 is composed of 14 different subunits. Subunits NuoB, C, D, E, F, and G constitute the peripheral sector of the complex.

It is found in the cell inner membrane. The enzyme catalyses a quinone + NADH + 5 H(+)(in) = a quinol + NAD(+) + 4 H(+)(out). NDH-1 shuttles electrons from NADH, via FMN and iron-sulfur (Fe-S) centers, to quinones in the respiratory chain. The immediate electron acceptor for the enzyme in this species is believed to be ubiquinone. Couples the redox reaction to proton translocation (for every two electrons transferred, four hydrogen ions are translocated across the cytoplasmic membrane), and thus conserves the redox energy in a proton gradient. The protein is NADH-quinone oxidoreductase subunit C of Rhodopseudomonas palustris (strain BisB18).